The chain runs to 557 residues: Potassium-transporting ATPase potassium-binding subunit (557 aa).

12 consecutive transmembrane segments (helical) span residues 5 to 25 (GFLL…PLGS), 63 to 83 (LCAI…MLLG), 132 to 152 (GLTV…FALI), 170 to 190 (LLRI…LFFI), 253 to 273 (FVQM…FGEV), 283 to 303 (LLWA…WAEV), 329 to 349 (VLVS…AVIA), 356 to 376 (ALGG…FGGV), 379 to 399 (GLYG…LMIG), 416 to 436 (LTAL…ALAM), 484 to 504 (LLAL…MAIA), and 526 to 546 (LFVG…FIPA).

Belongs to the KdpA family. As to quaternary structure, the system is composed of three essential subunits: KdpA, KdpB and KdpC.

The protein resides in the cell inner membrane. In terms of biological role, part of the high-affinity ATP-driven potassium transport (or Kdp) system, which catalyzes the hydrolysis of ATP coupled with the electrogenic transport of potassium into the cytoplasm. This subunit binds the periplasmic potassium ions and delivers the ions to the membrane domain of KdpB through an intramembrane tunnel. This chain is Potassium-transporting ATPase potassium-binding subunit, found in Escherichia coli O81 (strain ED1a).